The primary structure comprises 331 residues: Elongation factor Ts, mitochondrial (331 aa).

Residues 1–14 (MIVSRQVIRSVVRK) constitute a mitochondrion transit peptide.

Belongs to the EF-Ts family.

Its subcellular location is the mitochondrion. In terms of biological role, associates with the EF-Tu.GDP complex and induces the exchange of GDP to GTP. It remains bound to the aminoacyl-tRNA.EF-Tu.GTP complex up to the GTP hydrolysis stage on the ribosome. The polypeptide is Elongation factor Ts, mitochondrial (Brugia malayi (Filarial nematode worm)).